An 81-amino-acid chain; its full sequence is 2,3-bisphosphoglycerate-independent phosphoglycerate mutase (81 aa).

Ser14 serves as the catalytic Phosphoserine intermediate. A Mn(2+)-binding site is contributed by Ser14. His75 is a substrate binding site.

It belongs to the BPG-independent phosphoglycerate mutase family. Monomer. Requires Mn(2+) as cofactor.

It carries out the reaction (2R)-2-phosphoglycerate = (2R)-3-phosphoglycerate. It participates in carbohydrate degradation; glycolysis; pyruvate from D-glyceraldehyde 3-phosphate: step 3/5. Its function is as follows. Catalyzes the interconversion of 2-phosphoglycerate and 3-phosphoglycerate. In Tomato big bud phytoplasma, this protein is 2,3-bisphosphoglycerate-independent phosphoglycerate mutase (gpmI).